A 459-amino-acid chain; its full sequence is tRNA modification GTPase MnmE (459 aa).

3 residues coordinate (6S)-5-formyl-5,6,7,8-tetrahydrofolate: arginine 22, glutamate 85, and arginine 124. A TrmE-type G domain is found at 221–380; it reads GLSTVIVGKP…LEIQIRDLFF (160 aa). Asparagine 231 provides a ligand contact to K(+). GTP-binding positions include 231-236, 250-256, and 275-278; these read NVGKSS, TEVAGTT, and DTAG. Residue serine 235 participates in Mg(2+) binding. Residues threonine 250, valine 252, and threonine 255 each coordinate K(+). Threonine 256 is a Mg(2+) binding site. Position 459 (lysine 459) interacts with (6S)-5-formyl-5,6,7,8-tetrahydrofolate.

Belongs to the TRAFAC class TrmE-Era-EngA-EngB-Septin-like GTPase superfamily. TrmE GTPase family. As to quaternary structure, homodimer. Heterotetramer of two MnmE and two MnmG subunits. K(+) serves as cofactor.

It is found in the cytoplasm. Functionally, exhibits a very high intrinsic GTPase hydrolysis rate. Involved in the addition of a carboxymethylaminomethyl (cmnm) group at the wobble position (U34) of certain tRNAs, forming tRNA-cmnm(5)s(2)U34. The polypeptide is tRNA modification GTPase MnmE (Staphylococcus aureus (strain USA300 / TCH1516)).